Reading from the N-terminus, the 336-residue chain is Tryptophan--tRNA ligase (336 aa).

ATP-binding positions include 15-17 (QPT) and 24-25 (GN). The 'HIGH' region motif lies at 16–25 (PTSDSLHLGN). L-tryptophan is bound at residue Asp141. ATP contacts are provided by residues 153-155 (GED), Ile192, and 201-205 (KMSKS). The 'KMSKS' region signature appears at 201–205 (KMSKS).

Belongs to the class-I aminoacyl-tRNA synthetase family. Homodimer.

It localises to the cytoplasm. It catalyses the reaction tRNA(Trp) + L-tryptophan + ATP = L-tryptophyl-tRNA(Trp) + AMP + diphosphate + H(+). Its function is as follows. Catalyzes the attachment of tryptophan to tRNA(Trp). The polypeptide is Tryptophan--tRNA ligase (Mycobacterium tuberculosis (strain CDC 1551 / Oshkosh)).